Consider the following 241-residue polypeptide: Lactate utilization protein C (241 aa).

Belongs to the LutC/YkgG family.

Is involved in L-lactate degradation and allows cells to grow with lactate as the sole carbon source. This Bacillus velezensis (strain DSM 23117 / BGSC 10A6 / LMG 26770 / FZB42) (Bacillus amyloliquefaciens subsp. plantarum) protein is Lactate utilization protein C.